Here is a 213-residue protein sequence, read N- to C-terminus: ATP synthase peripheral stalk subunit OSCP, mitochondrial (213 aa).

Residues 1–23 (MAAPAVSGVSQQVRYFGTSVVRP) constitute a mitochondrion transit peptide. Residues 5-23 (AVSGVSQQVRYFGTSVVRP) carry the SIFI-degron motif. N6-acetyllysine is present on residues lysine 54, lysine 60, lysine 70, and lysine 73. Lysine 90 carries the post-translational modification N6-succinyllysine. Residues lysine 158 and lysine 162 each carry the N6-acetyllysine; alternate modification. N6-succinyllysine; alternate is present on residues lysine 158 and lysine 162. An N6-acetyllysine mark is found at lysine 172, lysine 176, and lysine 192. The residue at position 199 (lysine 199) is an N6-succinyllysine.

It belongs to the ATPase delta chain family. As to quaternary structure, component of the ATP synthase complex composed at least of ATP5F1A/subunit alpha, ATP5F1B/subunit beta, ATP5MC1/subunit c (homooctomer), MT-ATP6/subunit a, MT-ATP8/subunit 8, ATP5ME/subunit e, ATP5MF/subunit f, ATP5MG/subunit g, ATP5MK/subunit k, ATP5MJ/subunit j, ATP5F1C/subunit gamma, ATP5F1D/subunit delta, ATP5F1E/subunit epsilon, ATP5PF/subunit F6, ATP5PB/subunit b, ATP5PD/subunit d, ATP5PO/subunit OSCP. ATP synthase complex consists of a soluble F(1) head domain (subunits alpha(3) and beta(3)) - the catalytic core - and a membrane F(0) domain - the membrane proton channel (subunits c, a, 8, e, f, g, k and j). These two domains are linked by a central stalk (subunits gamma, delta, and epsilon) rotating inside the F1 region and a stationary peripheral stalk (subunits F6, b, d, and OSCP). Acetylation at Lys-162 decreases ATP production. Deacetylated by SIRT3. Post-translationally, in response to mitochondrial stress, the precursor protein is ubiquitinated by the SIFI complex in the cytoplasm before mitochondrial import, leading to its degradation. Within the SIFI complex, UBR4 initiates ubiquitin chain that are further elongated or branched by KCMF1.

It localises to the mitochondrion. The protein resides in the mitochondrion inner membrane. Functionally, subunit OSCP, of the mitochondrial membrane ATP synthase complex (F(1)F(0) ATP synthase or Complex V) that produces ATP from ADP in the presence of a proton gradient across the membrane which is generated by electron transport complexes of the respiratory chain. ATP synthase complex consist of a soluble F(1) head domain - the catalytic core - and a membrane F(1) domain - the membrane proton channel. These two domains are linked by a central stalk rotating inside the F(1) region and a stationary peripheral stalk. During catalysis, ATP synthesis in the catalytic domain of F(1) is coupled via a rotary mechanism of the central stalk subunits to proton translocation. In vivo, can only synthesize ATP although its ATP hydrolase activity can be activated artificially in vitro. Part of the complex F(0) domain. Part of the complex F(0) domain and the peripheric stalk, which acts as a stator to hold the catalytic alpha(3)beta(3) subcomplex and subunit a/ATP6 static relative to the rotary elements. This Callithrix jacchus (White-tufted-ear marmoset) protein is ATP synthase peripheral stalk subunit OSCP, mitochondrial.